A 566-amino-acid polypeptide reads, in one-letter code: Putative pentatricopeptide repeat-containing protein At1g28020 (566 aa).

9 PPR repeats span residues 136–171, 172–206, 207–242, 243–273, 279–309, 314–348, 349–385, 468–504, and 505–540; these read GDSV…GLLL, RPVP…DVEA, DNVT…GIKL, EWHT…TEQL, LKSA…YKSK, DNNG…PLEF, DHRI…RMNK, DYSV…NVDP, and DLIT…GIKL.

The protein belongs to the PPR family. P subfamily.

The sequence is that of Putative pentatricopeptide repeat-containing protein At1g28020 from Arabidopsis thaliana (Mouse-ear cress).